The chain runs to 782 residues: E3 UFM1-protein ligase 1 homolog (782 aa).

Residues 404-478 (NVSTQELEDE…SRGGGGASKK (75 aa)) are disordered.

The protein belongs to the UFL1 family.

Functionally, E3 UFM1-protein ligase that mediates ufmylation of target proteins. The polypeptide is E3 UFM1-protein ligase 1 homolog (Drosophila melanogaster (Fruit fly)).